The sequence spans 239 residues: Sugar fermentation stimulation protein homolog (239 aa).

It belongs to the SfsA family.

This is Sugar fermentation stimulation protein homolog from Methylobacterium sp. (strain 4-46).